A 279-amino-acid chain; its full sequence is MNLCGFEVGLDKPVFLIAGPCVIESREMAFETAGALKDICAEVGIPFIYKSSYDKANRSSGKSYRGMGMEKGLDILADVKKQLGVPVLTDVHSIEEIPAVAAVVDVLQTPAFLCRQTDFIHAVASCGRPVNIKKGQFLAPGDMKNVVDKAREANGGADNIMVCERGASFGYNNLVSDMRSLAIMRETGCPVVFDATHSVQLPGGQGTASGGQREFVPVLARAAVAVGVAGLFMETHPNPAQALSDGPNAWPLPRMKALLSTLKAIDELVKSRGLLETEA.

The protein belongs to the KdsA family.

The protein localises to the cytoplasm. The enzyme catalyses D-arabinose 5-phosphate + phosphoenolpyruvate + H2O = 3-deoxy-alpha-D-manno-2-octulosonate-8-phosphate + phosphate. Its pathway is carbohydrate biosynthesis; 3-deoxy-D-manno-octulosonate biosynthesis; 3-deoxy-D-manno-octulosonate from D-ribulose 5-phosphate: step 2/3. The protein operates within bacterial outer membrane biogenesis; lipopolysaccharide biosynthesis. This Azoarcus sp. (strain BH72) protein is 2-dehydro-3-deoxyphosphooctonate aldolase.